The primary structure comprises 357 residues: LINE-1 retrotransposable element ORF1 protein (357 aa).

Residues 1-40 (MAKGKRKNPTNRNQDHSPSSERSTPTPPSPGHPNTTENLD) are disordered. The stretch at 59 to 156 (HKSLKDLQES…IENIDTTVKE (98 aa)) forms a coiled coil. The tract at residues 179–274 (NLRIIGIDEN…KGRPIRITPD (96 aa)) is RNA recognition motif (RRM) domain. A C-terminal domain (CTD) region spans residues 278–339 (ETMKARRAWT…STNPALQRII (62 aa)).

It belongs to the transposase 22 family. As to quaternary structure, homotrimer (via coiled coil domain). May also form larger homooligomers. Interacts with Tex19.1 and UBR2. Interacts with MOV10. Polyubiquitinated, probably by UBR2, which induces its degradation. Expressed in meiotic spermatocytes and in the cerebellum (at protein level).

The protein resides in the nucleus. It localises to the nucleolus. Its subcellular location is the cytoplasm. It is found in the cytoplasmic ribonucleoprotein granule. The protein localises to the stress granule. Functionally, nucleic acid-binding protein which is essential for retrotransposition of LINE-1 elements in the genome. Functions as a nucleic acid chaperone binding its own transcript and therefore preferentially mobilizing the transcript from which they are encoded. The protein is LINE-1 retrotransposable element ORF1 protein of Mus musculus (Mouse).